Consider the following 189-residue polypeptide: TATA-box-binding protein 1 (189 aa).

A run of 2 repeats spans residues 10–86 and 101–179.

This sequence belongs to the TBP family.

General factor that plays a role in the activation of archaeal genes transcribed by RNA polymerase. Binds specifically to the TATA box promoter element which lies close to the position of transcription initiation. This is TATA-box-binding protein 1 (tbp1) from Haloferax volcanii (strain ATCC 29605 / DSM 3757 / JCM 8879 / NBRC 14742 / NCIMB 2012 / VKM B-1768 / DS2) (Halobacterium volcanii).